Consider the following 139-residue polypeptide: ATP synthase epsilon chain (139 aa).

This sequence belongs to the ATPase epsilon chain family. As to quaternary structure, F-type ATPases have 2 components, CF(1) - the catalytic core - and CF(0) - the membrane proton channel. CF(1) has five subunits: alpha(3), beta(3), gamma(1), delta(1), epsilon(1). CF(0) has three main subunits: a, b and c.

Its subcellular location is the cell inner membrane. Functionally, produces ATP from ADP in the presence of a proton gradient across the membrane. The sequence is that of ATP synthase epsilon chain from Serratia proteamaculans (strain 568).